The primary structure comprises 696 residues: Putative cyclic nucleotide-gated ion channel 13 (696 aa).

The Cytoplasmic portion of the chain corresponds to 1–81 (MAFGRNNRVR…QGSFLQNWNK (81 aa)). Residues 45 to 65 (KPLSFGSHNKKRDSNSSTTTQ) form a disordered region. Residues 82 to 102 (IFLFASVIALAIDPLFFYIPI) traverse the membrane as a helical segment. Residues 103-116 (VDGERHCLNLHRNL) lie on the Extracellular side of the membrane. Residues 117-137 (EIAASVLRTFIDAFYIIHIVF) traverse the membrane as a helical segment. The Cytoplasmic segment spans residues 138 to 170 (QFRTAYISPSSRVFGRGELVDDPKAIAIKYLSS). The chain crosses the membrane as a helical span at residues 171-191 (YFIIDLLSILPLPQLVVLAVI). The Extracellular portion of the chain corresponds to 192–204 (PNVNKPVSLITKD). The helical transmembrane segment at 205-225 (YLITVIFTQYIPRILRIYPLY) threads the bilayer. At 226 to 243 (TEVTRTSGIVTETAWAGA) the chain is on the cytoplasmic side. The chain crosses the membrane as a helical span at residues 244–264 (AWNLSLYMLASHVFGALWYLI). Topologically, residues 265–367 (SVEREDRCWR…GQNLNTSKFV (103 aa)) are extracellular. A helical transmembrane segment spans residues 368 to 388 (GEIIFAVSICISGLVLFALLI). Over 389 to 696 (GNMQKYLEST…SEPDFSLRNP (308 aa)) the chain is Cytoplasmic. Residues 474–598 (LFEI…SKQL) and Glu545 contribute to the a nucleoside 3',5'-cyclic phosphate site. Residues 590–605 (FRRLHSKQLQHTFRFY) are calmodulin-binding. One can recognise an IQ domain in the interval 610-639 (RTWGASFIQAAWRRHCRRKLARSLTEEEDR). Residues 677-696 (NNLPLLPPKPSEPDFSLRNP) form a disordered region.

Belongs to the cyclic nucleotide-gated cation channel (TC 1.A.1.5) family. As to quaternary structure, homotetramer or heterotetramer.

Its subcellular location is the cell membrane. Putative cyclic nucleotide-gated ion channel. This is Putative cyclic nucleotide-gated ion channel 13 (CNGC13) from Arabidopsis thaliana (Mouse-ear cress).